The primary structure comprises 451 residues: D-inositol 3-phosphate glycosyltransferase (451 aa).

His-37 lines the 1D-myo-inositol 3-phosphate pocket. UDP-N-acetyl-alpha-D-glucosamine-binding positions include 43-44 and Gly-51; that span reads QP. 1D-myo-inositol 3-phosphate contacts are provided by residues 48–53, Lys-106, Tyr-138, Thr-162, and Arg-182; that span reads DAGGMN. 3 residues coordinate UDP-N-acetyl-alpha-D-glucosamine: Arg-259, Lys-264, and Arg-323. Residues Tyr-332, Arg-333, and Ala-335 each contribute to the Mg(2+) site. Residues Glu-345 and Glu-353 each contribute to the UDP-N-acetyl-alpha-D-glucosamine site. Thr-359 is a Mg(2+) binding site.

Belongs to the glycosyltransferase group 1 family. MshA subfamily. In terms of assembly, homodimer.

The enzyme catalyses 1D-myo-inositol 3-phosphate + UDP-N-acetyl-alpha-D-glucosamine = 1D-myo-inositol 2-acetamido-2-deoxy-alpha-D-glucopyranoside 3-phosphate + UDP + H(+). In terms of biological role, catalyzes the transfer of a N-acetyl-glucosamine moiety to 1D-myo-inositol 3-phosphate to produce 1D-myo-inositol 2-acetamido-2-deoxy-glucopyranoside 3-phosphate in the mycothiol biosynthesis pathway. This chain is D-inositol 3-phosphate glycosyltransferase, found in Corynebacterium kroppenstedtii (strain DSM 44385 / JCM 11950 / CIP 105744 / CCUG 35717).